Consider the following 363-residue polypeptide: Holliday junction branch migration complex subunit RuvB (363 aa).

The segment at 1 to 32 (MAIQTDSFAAAPAPSSGSTRRLISAAPTSPNE) is disordered. Positions 7–18 (SFAAAPAPSSGS) are enriched in low complexity. The segment at 13–200 (APSSGSTRRL…FGIVARLEFY (188 aa)) is large ATPase domain (RuvB-L). Residues Leu-39, Arg-40, Gly-81, Lys-84, Thr-85, Thr-86, 147-149 (EDY), Arg-190, Tyr-200, and Arg-237 each bind ATP. Thr-85 is a Mg(2+) binding site. The small ATPAse domain (RuvB-S) stretch occupies residues 201–271 (TPEELVRIVT…IAELALTMLD (71 aa)). Residues 274-363 (PRGFDVMDRK…GPVGSDLFEG (90 aa)) form a head domain (RuvB-H) region. DNA contacts are provided by Arg-329 and Arg-334.

Belongs to the RuvB family. Homohexamer. Forms an RuvA(8)-RuvB(12)-Holliday junction (HJ) complex. HJ DNA is sandwiched between 2 RuvA tetramers; dsDNA enters through RuvA and exits via RuvB. An RuvB hexamer assembles on each DNA strand where it exits the tetramer. Each RuvB hexamer is contacted by two RuvA subunits (via domain III) on 2 adjacent RuvB subunits; this complex drives branch migration. In the full resolvosome a probable DNA-RuvA(4)-RuvB(12)-RuvC(2) complex forms which resolves the HJ.

Its subcellular location is the cytoplasm. It carries out the reaction ATP + H2O = ADP + phosphate + H(+). Functionally, the RuvA-RuvB-RuvC complex processes Holliday junction (HJ) DNA during genetic recombination and DNA repair, while the RuvA-RuvB complex plays an important role in the rescue of blocked DNA replication forks via replication fork reversal (RFR). RuvA specifically binds to HJ cruciform DNA, conferring on it an open structure. The RuvB hexamer acts as an ATP-dependent pump, pulling dsDNA into and through the RuvAB complex. RuvB forms 2 homohexamers on either side of HJ DNA bound by 1 or 2 RuvA tetramers; 4 subunits per hexamer contact DNA at a time. Coordinated motions by a converter formed by DNA-disengaged RuvB subunits stimulates ATP hydrolysis and nucleotide exchange. Immobilization of the converter enables RuvB to convert the ATP-contained energy into a lever motion, pulling 2 nucleotides of DNA out of the RuvA tetramer per ATP hydrolyzed, thus driving DNA branch migration. The RuvB motors rotate together with the DNA substrate, which together with the progressing nucleotide cycle form the mechanistic basis for DNA recombination by continuous HJ branch migration. Branch migration allows RuvC to scan DNA until it finds its consensus sequence, where it cleaves and resolves cruciform DNA. This is Holliday junction branch migration complex subunit RuvB from Leptothrix cholodnii (strain ATCC 51168 / LMG 8142 / SP-6) (Leptothrix discophora (strain SP-6)).